Reading from the N-terminus, the 237-residue chain is Large ribosomal subunit protein uL3 (237 aa).

2 disordered regions span residues 133–155 (ASHGNSITHRSHGSTGQRQDPGK) and 213–237 (PENAPKPAGLRAGAKAEAAATEGGE). A compositionally biased stretch (polar residues) spans 135–150 (HGNSITHRSHGSTGQR). At Gln151 the chain carries N5-methylglutamine. Residues 220–237 (AGLRAGAKAEAAATEGGE) are compositionally biased toward low complexity.

Belongs to the universal ribosomal protein uL3 family. In terms of assembly, part of the 50S ribosomal subunit. Forms a cluster with proteins L14 and L19. Post-translationally, methylated by PrmB.

In terms of biological role, one of the primary rRNA binding proteins, it binds directly near the 3'-end of the 23S rRNA, where it nucleates assembly of the 50S subunit. The polypeptide is Large ribosomal subunit protein uL3 (Brucella abortus (strain S19)).